A 77-amino-acid chain; its full sequence is uncharacterized protein (77 aa).

The disordered stretch occupies residues His-54 to Leu-77. Positions His-59 to Leu-70 are enriched in basic and acidic residues.

This is an uncharacterized protein from Escherichia coli O157:H7.